Consider the following 427-residue polypeptide: Probable fatty acid methyltransferase Rv3720 (427 aa).

S-adenosyl-L-methionine-binding positions include 167-168, 202-210, and 227-232; these read YT, LLDVGCGWG, and TLSAEQ.

The protein belongs to the CFA/CMAS family.

In terms of biological role, may be a S-adenosylmethionine-dependent methyltransferase involved in fatty acid metabolism. The chain is Probable fatty acid methyltransferase Rv3720 from Mycobacterium tuberculosis (strain ATCC 25618 / H37Rv).